Consider the following 1029-residue polypeptide: MPVMERVAEETVATNNIQLKARVDDVPCNKLDARHNDMVIQSETANSDCPGSSAHRNVDLTKPPPPEEAAGAKLSVEELTLGNYRIVQGSNNTNVDSPRAGKFEHLYRLARGSAFRAGDGDLDSQPRDMDQMLSRIRQQLAGAPSERQNLKPFMSRRSDQNLEAFSERLRAAGENSIMNAPALISEGVQMKTPVSSSNFSQLLLKRAMKGKGVVGKNQETPPEFVSDQDLGSKEKKLDISKSPTPHDVLPLKSSPKGNGMVSHGDGNHSKSSIGISLREFLRSSYAKREKRHGLCLFRQLVELVDSAHSKRLFLLDLRPSLFTLVPSKKLRYIGNFGKNDLESDVDEDLNRRRPVVEESSSGGRDSKKRKMDLHLNSPGNQLQATSTGRPFKRKSPVIDLNMVDARNPDSCELQQQDYIKNLSVSSVSRKQSMSTWLEEQWYTCPEEINGEDIGEKSNIYALGVLLFELLCHCESGEMHAAMMADLRHRILPPTFLSKYPKEAGFCLWLLHPEPSSRPSARDILKSELICEDDSVKSTAAAEEISELLLHFLSSLEVQKKKKASKLLQDIQTLEDDIKEAERRYSSNVSLVRSHGAIEKRVQSSPLDEHCTTSSALFVPTANTDRLMSNIRQLEDAYFFMRSQINLSSSAATARSDKTLKDRDRCSENQNENQDMSTKGKSSDQLEVFFEGLCKFARYSKFETCGTIRSGDLLNSASVVCSLSFDPDEEHIAAAGISKKIKIFDFNAFMNESVGVHYPLVEMVNKSKLSCVCWNSYIKNYLASTDYDGVVQIWDAGTGQGFSQYTEHQKRAWSVDFSPSDPTKFVSGSDDCSVKLWSINEKRSLGTIWSPANVCCVQFSSYSNHLLAFGSADYKVYCYDLRYVKTPWCTLAGHEKAVSYVKFMDSETIVSASTDNSLKLWNLNKTNSSGLSPGACSLTYKGHTNQKNFVGLSVLDGYIACGSETNEVYSYYKSLPMPMTSYKFGSVDPISGNEYFDDNGQFVSSVCWRKKSNMLVAANSTGNMKLLKLV.

Residues 42 to 69 (SETANSDCPGSSAHRNVDLTKPPPPEEA) are disordered. A Protein kinase domain is found at 188 to 529 (VQMKTPVSSS…ARDILKSELI (342 aa)). Residues 194–202 (VSSSNFSQL) and K216 contribute to the ATP site. The interval 213-269 (VVGKNQETPPEFVSDQDLGSKEKKLDISKSPTPHDVLPLKSSPKGNGMVSHGDGNHS) is disordered. The segment covering 230–239 (LGSKEKKLDI) has biased composition (basic and acidic residues). Catalysis depends on D316, which acts as the Proton acceptor. The segment at 347–392 (EDLNRRRPVVEESSSGGRDSKKRKMDLHLNSPGNQLQATSTGRPFK) is disordered. Residues 377–388 (SPGNQLQATSTG) are compositionally biased toward polar residues. Residues 557 to 589 (VQKKKKASKLLQDIQTLEDDIKEAERRYSSNVS) adopt a coiled-coil conformation. Residues 653–679 (ARSDKTLKDRDRCSENQNENQDMSTKG) are disordered. Residues 654 to 666 (RSDKTLKDRDRCS) show a composition bias toward basic and acidic residues. The segment covering 667–679 (ENQNENQDMSTKG) has biased composition (polar residues). WD repeat units follow at residues 714-753 (NSASVVCSLSFDPDEEHIAAAGISKKIKIFDFNAFMNESV), 763-803 (VNKS…GFSQ), 806-846 (EHQK…SLGT), 848-888 (WSPA…TPWC), 892-930 (GHEKAVSYVKFMDSETIVSASTDNSLKLWNLNKTNSSGL), 932-971 (PGACSLTYKGHTNQKNFVGLSVLDGYIACGSETNEVYSYY), and 997-1029 (DNGQFVSSVCWRKKSNMLVAANSTGNMKLLKLV). A DWD box motif is present at residues 866–881 (LAFGSADYKVYCYDLR).

In terms of assembly, interacts with CO, COP1, HFR1, HY5 and PHYA. Light induces dissociation of the SPA1/COP1 complex. Binds to CRY1 in response to blue light, this interaction prevents SPA1/COP1 complex formation but stimulate CRY2/COP1 complex, and thus avoid COP1-dependent degradation of the transcription factor HY5 by the proteasome and promotes hypocotyl elongation.

Its subcellular location is the nucleus speckle. It localises to the nucleus. The protein localises to the PML body. Its function is as follows. Controls normal photoperiodic flowering and regulates circadian rhythms. Required for suppression of photomorphogenesis in dark-grown seedlings and for normal elongation growth of adult plants. Integral component of the COP1/SPA E3 ubiquitin-protein ligase complex. Involved in HY5, HFR1, LAF1 and CO degradation. This chain is Protein SUPPRESSOR OF PHYA-105 1 (SPA1), found in Arabidopsis thaliana (Mouse-ear cress).